Consider the following 360-residue polypeptide: Actin-like protein MamK (360 aa).

ATP is bound by residues Lys22, Thr33–Ser34, and Asp89. Glu156 is a Mg(2+) binding site. ATP is bound by residues Ala177 to Thr179, Lys231 to Ser235, and Gly302.

It belongs to the FtsA/MreB family. MamK subfamily. As to quaternary structure, forms cytoplasmic filaments. Interacts with MamJ. Forms filaments in the absence of other magnetosome proteins and in E.coli. Filament formation in vitro requires ATP, GTP or a non-hydrolyzable ATP analog.

It localises to the cytoplasm. The protein resides in the cytoskeleton. It catalyses the reaction ATP + H2O = ADP + phosphate + H(+). Its activity is regulated as follows. Filament dynamics depend partially on MamJ. Protein with ATPase activity which forms dynamic cytoplasmic filaments that are involved in sorting, concatenating and/or correctly positioning of magnetosomes in the cell. Not absolutely necessary for assembly of short chains. Filaments grow from the both cell poles towards midcell, and are probably disassembled at the other end of the cell, a process known as treadmilling. Polymerizes in the presence of ATP, GTP or a non-hydrolyzable ATP analog. Required for correct segregation and positioning of magnetosomes following cell division. The polypeptide is Actin-like protein MamK (Magnetospirillum gryphiswaldense (strain DSM 6361 / JCM 21280 / NBRC 15271 / MSR-1)).